The chain runs to 281 residues: Undecaprenyl-diphosphatase (281 aa).

Helical transmembrane passes span 4–24, 46–63, 83–103, 108–128, 187–207, 222–242, and 257–277; these read ILLLKAVILGVVEGLTEFLPI, AFEVIIQFGAILAVCWEF, FVLNLFIASIPAMGLGFLFGK, VLFSPIPVASAFIVGTLIIFW, AVATEFSFFLAIPVIGGATAY, EFTLAIVVGFIAAFISAFVCV, and FAWYRIAFGILVLFTSYTGLI.

This sequence belongs to the UppP family.

It is found in the cell inner membrane. The enzyme catalyses di-trans,octa-cis-undecaprenyl diphosphate + H2O = di-trans,octa-cis-undecaprenyl phosphate + phosphate + H(+). Its function is as follows. Catalyzes the dephosphorylation of undecaprenyl diphosphate (UPP). Confers resistance to bacitracin. In Polynucleobacter necessarius subsp. necessarius (strain STIR1), this protein is Undecaprenyl-diphosphatase.